Consider the following 106-residue polypeptide: Protamine (106 aa).

Residues A1–R106 are disordered.

As to expression, sperm.

It localises to the nucleus. The protein resides in the chromosome. The sequence is that of Protamine from Phorcus turbinatus (Sea snail).